A 382-amino-acid polypeptide reads, in one-letter code: Glutaminyl-peptide cyclotransferase-like protein (382 aa).

Residues 35 to 55 (LLPLLLALAVGSAFYTIWSGW) form a helical membrane-spanning segment. A disulfide bond links Cys-167 and Cys-191. Residue Asp-186 participates in Zn(2+) binding. Glu-225 serves as the catalytic Proton acceptor. A Zn(2+)-binding site is contributed by Glu-226. Asp-269 (proton acceptor) is an active-site residue. His-351 serves as a coordination point for Zn(2+).

This sequence belongs to the glutaminyl-peptide cyclotransferase family.

The protein resides in the golgi apparatus membrane. It catalyses the reaction N-terminal L-glutaminyl-[peptide] = N-terminal 5-oxo-L-prolyl-[peptide] + NH4(+). Responsible for the biosynthesis of pyroglutamyl peptides. The sequence is that of Glutaminyl-peptide cyclotransferase-like protein (QPCTL) from Homo sapiens (Human).